A 177-amino-acid chain; its full sequence is Translation initiation factor IF-3 (177 aa).

Belongs to the IF-3 family. As to quaternary structure, monomer.

It localises to the cytoplasm. Functionally, IF-3 binds to the 30S ribosomal subunit and shifts the equilibrium between 70S ribosomes and their 50S and 30S subunits in favor of the free subunits, thus enhancing the availability of 30S subunits on which protein synthesis initiation begins. This Nostoc sp. (strain PCC 7120 / SAG 25.82 / UTEX 2576) protein is Translation initiation factor IF-3.